A 540-amino-acid chain; its full sequence is Phenylalanine--tRNA ligase beta subunit (540 aa).

Residues 268-342 enclose the B5 domain; that stretch reads LRHTSVPFSL…MAYGYDRFTL (75 aa). Positions 320, 326, 329, and 330 each coordinate Mg(2+).

It belongs to the phenylalanyl-tRNA synthetase beta subunit family. Type 2 subfamily. Tetramer of two alpha and two beta subunits. The cofactor is Mg(2+).

The protein localises to the cytoplasm. The catalysed reaction is tRNA(Phe) + L-phenylalanine + ATP = L-phenylalanyl-tRNA(Phe) + AMP + diphosphate + H(+). The polypeptide is Phenylalanine--tRNA ligase beta subunit (Metallosphaera sedula (strain ATCC 51363 / DSM 5348 / JCM 9185 / NBRC 15509 / TH2)).